The sequence spans 521 residues: Organic cation/carnitine transporter 6 (521 aa).

The Cytoplasmic segment spans residues 1–37; the sequence is MADPISEPLLSHLTDDSGVNEKTRLEALTFDKIVEQS. The helical transmembrane segment at 38 to 58 threads the bilayer; that stretch reads LSDFGFWQFFQISLVGLALLF. Residues 59–123 lie on the Extracellular side of the membrane; the sequence is DAQQIFITVY…GLECSSSLLR (65 aa). Residue N79 is glycosylated (N-linked (GlcNAc...) asparagine). A helical membrane pass occupies residues 124–144; it reads GMPSSAFYIGAIVGGFFLALI. Residues 145–154 are Cytoplasmic-facing; it reads PDDSLGRKKL. The chain crosses the membrane as a helical span at residues 155–177; sequence VLFSTFAMSITSISVIFSTNVWI. Over 178–182 the chain is Extracellular; that stretch reads YTFLK. The helical transmembrane segment at 183 to 200 threads the bilayer; that stretch reads FIIGFSRSQTWSYALVLI. 200 to 207 provides a ligand contact to ATP; that stretch reads ISERVSTR. Over 201-213 the chain is Cytoplasmic; sequence SERVSTRWRPRAT. A helical membrane pass occupies residues 214 to 234; that stretch reads MIPFTLFVLGFMSLSGIAFLA. Residues 235-241 are Extracellular-facing; it reads QDSSWRY. The chain crosses the membrane as a helical span at residues 242–262; sequence LYLYTSVPAVFYCIFLYLFAL. Topologically, residues 263-326 are cytoplasmic; it reads ESPRWLHMQG…FFFRKWAFRR (64 aa). Residues 327–347 traverse the membrane as a helical segment; the sequence is ILVVMIIMFGLGISYYGVPLA. Residues 348-356 lie on the Extracellular side of the membrane; that stretch reads ARDIDVNIY. The chain crosses the membrane as a helical span at residues 357–377; the sequence is LSETLNALVELPTFVITPILL. The Cytoplasmic portion of the chain corresponds to 378-385; that stretch reads ERFNRRSS. Residues 386–406 form a helical membrane-spanning segment; sequence VLVNTLLGGASGVLCFVLSIL. The Extracellular portion of the chain corresponds to 407–412; it reads GKTEIA. Residues 413–433 traverse the membrane as a helical segment; the sequence is FAFELGTFFCARIGFNLMAVF. Over 434 to 447 the chain is Cytoplasmic; sequence MVEMFPTCVRSSAT. Residues 448–468 form a helical membrane-spanning segment; that stretch reads MMFRQALVVGGACCPLIASIG. Residues 469-473 lie on the Extracellular side of the membrane; it reads RYIPS. The chain crosses the membrane as a helical span at residues 474–494; it reads VSFAIFGIAMSGLGMFVLILP. Topologically, residues 495–521 are cytoplasmic; it reads ETKGLSLCDSMEEQEKRDQAVNTSHVC.

This sequence belongs to the major facilitator (TC 2.A.1) superfamily. Organic cation transporter (TC 2.A.1.19) family. Expressed in roots and stems. In the stem of secondary inflorescences, localized to the phloem. Also present in flowers, specifically in the stamen, in the filaments and the connective, and restricted to major veins in leaves.

It localises to the vacuole membrane. Functionally, high affinity carnitine transporter involved in the active cellular uptake of carnitine. Also transports organic cations. This chain is Organic cation/carnitine transporter 6 (OCT6), found in Arabidopsis thaliana (Mouse-ear cress).